A 173-amino-acid chain; its full sequence is ATP-dependent protease subunit HslV (173 aa).

Thr2 is a catalytic residue. The Na(+) site is built by Gly158, Asp161, and Thr164.

It belongs to the peptidase T1B family. HslV subfamily. In terms of assembly, a double ring-shaped homohexamer of HslV is capped on each side by a ring-shaped HslU homohexamer. The assembly of the HslU/HslV complex is dependent on binding of ATP.

It localises to the cytoplasm. The enzyme catalyses ATP-dependent cleavage of peptide bonds with broad specificity.. With respect to regulation, allosterically activated by HslU binding. Functionally, protease subunit of a proteasome-like degradation complex believed to be a general protein degrading machinery. The protein is ATP-dependent protease subunit HslV of Actinobacillus succinogenes (strain ATCC 55618 / DSM 22257 / CCUG 43843 / 130Z).